Here is a 154-residue protein sequence, read N- to C-terminus: Egg-lysin (154 aa).

Positions 1 to 18 are cleaved as a signal peptide; that stretch reads MKLFVLCIFAMMATLAMS.

Homodimer. Sperm.

Dissolves the egg vitelline layer nonenzymatically during fertilization. It creates a hole of about 3 mu-m in diameter through which the sperm pass. The polypeptide is Egg-lysin (Haliotis kamtschatkana (Pinto abalone)).